The primary structure comprises 48 residues: DNA-directed RNA polymerase subunit Rpo12 (48 aa).

Cys6, Cys9, Cys26, and Cys29 together coordinate Zn(2+).

The protein belongs to the archaeal Rpo12/eukaryotic RPC10 RNA polymerase subunit family. In terms of assembly, part of the 13-subunit RNA polymerase. Zn(2+) is required as a cofactor.

The protein resides in the cytoplasm. The enzyme catalyses RNA(n) + a ribonucleoside 5'-triphosphate = RNA(n+1) + diphosphate. DNA-dependent RNA polymerase (RNAP) catalyzes the transcription of DNA into RNA using the four ribonucleoside triphosphates as substrates. This Sulfolobus acidocaldarius (strain ATCC 33909 / DSM 639 / JCM 8929 / NBRC 15157 / NCIMB 11770) protein is DNA-directed RNA polymerase subunit Rpo12.